Here is a 153-residue protein sequence, read N- to C-terminus: Transcription antitermination protein NusB (153 aa).

The protein belongs to the NusB family.

In terms of biological role, involved in transcription antitermination. Required for transcription of ribosomal RNA (rRNA) genes. Binds specifically to the boxA antiterminator sequence of the ribosomal RNA (rrn) operons. The chain is Transcription antitermination protein NusB from Nitratidesulfovibrio vulgaris (strain ATCC 29579 / DSM 644 / CCUG 34227 / NCIMB 8303 / VKM B-1760 / Hildenborough) (Desulfovibrio vulgaris).